A 3898-amino-acid polypeptide reads, in one-letter code: MELITNELLYKTYKQKPVGVEEPVYDQAGNPLFGERGAIHPQSTLKLPHKRGERNVPTSLASLPKRGDCRSGNSKGPVSGIYLKPGPLFYQDYKGPVYHRAPLELFEEGSMCETTKRIGRVTGSDGKLYHIYICIDGCITVKSATRSHQRVLRWVHNRLDCPLWVTSCSDTKEEGATKKKQQKPDRLEKGRMKIVPKESEKDSKTKPPDATIVVDGVKYQVKKKGKVKSKNTQDGLYHNKNKPPESRKKLEKALLAWAILAVVLIEVTMGENITQWNLQDNGTEGIQRAMFQRGVNRSLHGIWPEKICTGVPSHLATDVELKTIHGMMDASEKTNYTCCRLQRHEWNKHGWCNWYNIEPWILIMNRTQANLTEGQPPRECAVTCRYDRDSDLNVVTQARDSPTPLTGCKKGKNFSFAGVLTRGPCNFEIAASDVLFKEHECTGVFQDTAHYLVDGVTNSLESARQGTAKLTTWLGKQLGILGKKLENKSKTWFGAYAASPYCDVDRKIGYIWFTKNCTPACLPKNTKIIGPGKFDTNAEDGKILHEMGGHLSEVLLLSLVVLSDFAPETASAMYLILHFSIPQSHVDITDCDKTQLNLTIELTTADVIPGSVWNLGKYVCIRPDWWPYETAAVLAFEEVGQVVKIVLRALRDLTRIWNAATTTAFLVCLIKMVRGQVVQGILWLLLITGVQGHLDCKPEYSYAIAKNDRVGPLGAEGLTTVWKDYSHEMKLEDTMVIAWCKGGKFTYLSRCTRETRYLAILHSRALPTSVVFKKLFEGQKQEDTVEMDDDFEFGLCPCDAKPIVRGKFNTTLLNGPAFQMVCPIGWTGTVSCMLANRDTLDTAVVRTYRRSVPFPYRQGCITQKTLGEDLYDCALGGNWTCVTGDQSRYTGGLIESCKWCGYKFQKSEGLPHYPIGKCRLNNETGYRLVDDTSCDREGVAIVPHGLVKCKIGDTTVQVIATDTKLGPMPCKPHEIISSEGPIEKTACTFNYTRTLKNKYFEPRDSYFQQYMLKGDYQYWFDLEVTDHHRDYFAESILVVVVALLGGRYVLWLLVTYMVLSEQKASGAQYGAGEVVMMGNLLTHDNVEVVTYFFLLYLLLREESVKKWVLLLYHILVAHPLKSVIVILLMIGDVVKADPGGQGYLGQIDVCFTMVVIIIIGLIIARRDPTIVPLITIVASLRVTGLTYSPGVDAAMAVITITLLMVSYVTDYFRYKRWLQCILSLVSGVFLIRCLIHLGRIETPEVTIPNWRPLTLILFYLISTTVVTMWKIDLAGLLLQGVPILLLITTLWADFLTLILILPTYELVKLYYLKTIKTDIEKSWLGGLDYKRVDSIYDVDESGEGVYLFPSRQKAQKNFSMLLPLVRATLISCVSSKWQLIYMAYLSVDFMYYMHRKVIEEISGGTNMISRIVAALIELNWSMEEEESKGLKKFYLLSGRLRNLIIKHKVRNETVAGWYGEEEVYGMPKIMTIIKASTLNKNKHCIICTVCEGRKWKGGTCPKCGRHGKPITCGMSLADFEERHYKRIFIREGNFEGPFRQEYNGFIQYTARGQLFLRNLPILATKVKMLMVGNLGEEVGDLEHLGWILRGPAVCKKITEHERCHINILDKLTAFFGIMPRGTTPRAPVRFPTSLLKVRRGLETGWAYTHQGGISSVDHVTAGKDLLVCDSMGRTRVVCQSNNKLTDETEYGVKTDSGCPDGARCYVLNPEAVNISGSKGAVVHLQKTGGEFTCVTASGTPAFFDLKNLKGWSGLPIFEASSGRVVGRVKVGKNEESKPTKIMSGIQTVSKNTADLTEMVKKITSMNRGDFKQITLATGAGKTTELPKAVIEEIGRHKRVLVLIPLRAAAESVYQYMRLKHPSISFNLRIGDMKEGDMATGITYASYGYFCQMPQPKLRAAMVEYSYIFLDEYHCATPEQLAIIGKIHRFSESIRVVAMTATPAGSVTTTGQKHPIEEFIAPEVMEGEDLGSQFLDIAGLKIPVDEMKGNMLVFVPTRNMAVEVAKKLKAKGYNSGYYYSGEDPANLRVVTSQSPYVIVATNAIESGVTLPDLDTVVDTGLKCEKRVRVSSKIPFIVTGLKRMAVTVGEQAQRRGRVGRVKPGRYYRSQETATGSKDYHYDLLQAQRYGIEDGINVTKSFREMNYDWSLYEEDSLLITQLEILNNLLISEDLPAAVKNIMARTDHPEPIQLAYNSYEVQVPVLFPKIRNGEVTDTYENYSFLNARKLGEDVPVYIYATEDEDLAVDLLGLDWPDPGNQQVVETGKALKQVAGLSSAENALLVALFGYVGYQALSKRHVPMITDIYTIEDQRLEDTTHLQYAPNAIKTEGTETELKELASGDVEKIMGAISDYAAGGLDFVKSQAEKIKTAPLFKENVEAARGYVQKLIDSLIEDKDVIIRYGLWGTHTALYKSIAARLGHETAFATLVLKWLAFGGETVSDHIRQAAVDLVVYYVMNKPSFPGDTETQQEGRRFVASLFISALATYTYKTWNYNNLSKVVEPALAYLPYATSALKMFTPTRLESVVILSTTIYKTYLSIRKGKSDGLLGTGISAAMEILSQNPVSVGISVMLGVGAIAAHNAIESSEQKRTLLMKVFVKNFLDQAATDELVKENPEKIIMALFEAVQTIGNPLRLIYHLYGVYYKGWEAKELSERTAGRNLFTLIMFEAFELLGMDSEGKIRNLSGNYILDLIHGLHKQINRGLKKIVLGWAPAPFSCDWTPSDERIRLPTDSYLRVETKCPCGYEMKALKNVSGKLTKVEESGPFLCRNRPGRGPVNYRVTKYYDDNLREIRPVAKLEGQVEHYYKGVTARIDYSKGKTLLATDKWEVEHGTLTRLTKRYTGVGFRGAYLGDEPNHRDLVERDCATITKNTVQFLKMKKGCAFTYDLTISNLTRLIELVHRNNLEEKEIPTATVTTWLAYTFVNEDVGTIKPVLGERVIPDPVVDINLQPEVQVDTSEVGITIIGKEAVMTTGVTPVMEKVEPDTDNNQSSVKIGLDEGNYPGPGVQTHTLVEEIHNKDARPFIMVLGSKSSMSNRAKTARNINLYTGNDPREIRDLMAEGRILVVALRDIDPDLSELVDFKGTFLDREALEALSLGQPKPKQVTKAAIRDLLKEERQVEIPDWFTSDDPVFLDIAMKKDKYHLIGDVVEVKDQAKALGATDQTRIVKEVGSRTYTMKLSSWFLQASSKQMSLTPLFEELLLRCPPATKSNKGHMASAYQLAQGNWEPLGCGVHLGTVPARRVKMHPYEAYLKLKDLVEEEEKKPRIRDTVIREHNKWILKKIKFQGNLNTKKMLNPGKLSEQLDREGHKRNIYNNQISTVMSSAGIRLEKLPIVRAQTDTKSFHEAIRDKIDKNENRQNPELHNKLLEIFHTIADPSLKHTYGEVTWEQLEAGINRKGAAGFLEKKNIGEVLDSEKHLVEQLVRDLKAGRKIRYYETAIPKNEKRDVSDDWQAGDLVDEKKPRVIQYPEAKTRLAITKVMYNWVKQQPVVIPGYEGKTPLFNIFNKVRKEWDLFNEPVAVSFDTKAWDTQVTSRDLHLIGEIQKYYYRKEWHKFIDTITDHMVEVPVITADGEVYIRNGQRGSGQPDTSAGNSMLNVLTMIYAFCESTGVPYKSFNRVAKIHVCGDDGFLITEKGLGLKFSNKGMQILHEAGKPQKLTEGEKMKVAYKFEDIEFCSHTPVPVRWSDNTSSYMAGRDTAVILSKMATRLDSSGERGTTAYEKAVAFSFLLMYSWNPLVRRICLLVLSQRPETAPSTQTTYYYKGDPIGAYKDVIGRNLSELKRTGFEKLANLNLSLSTLGIWTKHTSKRIIQDCVAIGKEEGNWLVNADRLISSKTGHLYIPDKGFTLQGKHYEQLQLGAETNPVMGVGTERYKLGPIVNLLLRRLKVLLMAAVGASS.

The Peptidase C53 domain occupies 1–168 (MELITNELLY…LDCPLWVTSC (168 aa)). Disordered stretches follow at residues 47-72 (LPHK…CRSG), 172-209 (KEEG…KPPD), and 223-245 (KKGK…KPPE). Residues H49 and C69 each act as for N-terminal protease activity in the active site. Residues 172-207 (KEEGATKKKQQKPDRLEKGRMKIVPKESEKDSKTKP) are compositionally biased toward basic and acidic residues. N272, N281, N296, and N335 each carry an N-linked (GlcNAc...) asparagine; by host glycan. 2 disulfide bridges follow: C308-C352 and C338-C339. Catalysis depends on for E(rns) glycoprotein RNase activity residues H344, E345, K348, and H349. N-linked (GlcNAc...) asparagine; by host glycans are attached at residues N365 and N370. Disulfide bonds link C380–C425 and C384–C408. Residues N413, N487, and N597 are each glycosylated (N-linked (GlcNAc...) asparagine; by host). Topologically, residues 498–666 (ASPYCDVDRK…WNAATTTAFL (169 aa)) are lumenal. The chain crosses the membrane as a helical span at residues 667 to 687 (VCLIKMVRGQVVQGILWLLLI). The Lumenal portion of the chain corresponds to 688–1035 (TGVQGHLDCK…DHHRDYFAES (348 aa)). Intrachain disulfides connect C696–C740 and C751–C798. N-linked (GlcNAc...) asparagine; by host glycosylation is found at N809, N878, N922, and N990. 8 helical membrane passes run 1036–1056 (ILVV…LVTY), 1079–1099 (NLLT…YLLL), 1108–1128 (VLLL…VILL), 1144–1164 (LGQI…LIIA), 1189–1209 (PGVD…SYVT), 1217–1237 (WLQC…LIHL), 1247–1267 (IPNW…TVVT), and 1281–1301 (VPIL…ILIL). N-linked (GlcNAc...) asparagine; by host glycosylation is present at N1357. Residues 1360–1380 (MLLPLVRATLISCVSSKWQLI) form a helical membrane-spanning segment. N-linked (GlcNAc...) asparagine; by host glycosylation occurs at N1419. Residues 1441 to 1589 (RNLIIKHKVR…DLEHLGWILR (149 aa)) enclose the Peptidase C74 domain. H1447 acts as the For cysteine protease NS2 activity in catalysis. N1451 is a glycosylation site (N-linked (GlcNAc...) asparagine; by host). Catalysis depends on for cysteine protease NS2 activity residues E1461 and C1512. Residues 1568-1588 (MLMVGNLGEEVGDLEHLGWIL) traverse the membrane as a helical segment. Residues 1590–1763 (GPAVCKKITE…LPIFEASSGR (174 aa)) enclose the Peptidase S31 domain. Residues H1658 and D1695 each act as charge relay system; for serine protease NS3 activity in the active site. N1713 carries an N-linked (GlcNAc...) asparagine; by host glycan. The Charge relay system; for serine protease NS3 activity role is filled by S1752. The Helicase ATP-binding domain occupies 1802-1960 (ITSMNRGDFK…QKHPIEEFIA (159 aa)). 1815–1822 (LATGAGKT) serves as a coordination point for ATP. A DEAH box motif is present at residues 1910–1913 (DEYH). One can recognise a Helicase C-terminal domain in the interval 1978–2143 (GLKIPVDEMK…NVTKSFREMN (166 aa)). N-linked (GlcNAc...) asparagine; by host glycans are attached at residues N2134, N2217, N2494, N2682, N2751, N2891, and N2988. T3499 and L3501 together coordinate GTP. One can recognise a RdRp catalytic domain in the interval 3518–3641 (PVAVSFDTKA…ITEKGLGLKF (124 aa)). The N-linked (GlcNAc...) asparagine; by host glycan is linked to N3688. The GTP site is built by R3696 and K3704. 2 N-linked (GlcNAc...) asparagine; by host glycosylation sites follow: N3777 and N3793.

It belongs to the pestivirus polyprotein family. In terms of assembly, homodimer; disulfide-linked. Homodimer; disulfide-linked. Heterodimer with E1; disulfide-linked. As to quaternary structure, interacts with host IFIH1/MDA5; this interaction is involved in the inhibition of IFN-beta production. In terms of processing, heavily glycosylated. Post-translationally, the viral RNA of pestiviruses is expressed as a single polyprotein which undergoes post-translational proteolytic processing resulting in the production of at least eleven individual proteins. The N-terminal protease cleaves itself from the nascent polyprotein autocatalytically and thereby generates the N-terminus of the adjacent viral capsid protein C. Cleavage between E2 and p7 is partial.

Its subcellular location is the virion. It is found in the host membrane. It localises to the virion membrane. The protein resides in the host endoplasmic reticulum membrane. The protein localises to the host cytoplasm. It catalyses the reaction Leu is conserved at position P1 for all four cleavage sites. Alanine is found at position P1' of the NS4A-NS4B cleavage site, whereas serine is found at position P1' of the NS3-NS4A, NS4B-NS5A and NS5A-NS5B cleavage sites.. The catalysed reaction is RNA(n) + a ribonucleoside 5'-triphosphate = RNA(n+1) + diphosphate. The enzyme catalyses a ribonucleoside 5'-triphosphate + H2O = a ribonucleoside 5'-diphosphate + phosphate + H(+). It carries out the reaction ATP + H2O = ADP + phosphate + H(+). It catalyses the reaction a ribonucleotidyl-ribonucleotide-RNA + H2O = a 3'-end 3'-phospho-ribonucleotide-RNA + a 5'-end dephospho-ribonucleoside-RNA + H(+). The catalysed reaction is a ribonucleotidyl-ribonucleotide-RNA = a 3'-end 2',3'-cyclophospho-ribonucleotide-RNA + a 5'-end dephospho-ribonucleoside-RNA. The enzyme catalyses a 3'-end 2',3'-cyclophospho-ribonucleotide-RNA + H2O = a 3'-end 3'-phospho-ribonucleotide-RNA + H(+). Its activity is regulated as follows. Inhibited by Zn(2+), which binds the catalytic site. Functionally, leader cysteine autoprotease that cleaves itself from the nascent polyprotein during translation of the viral mRNA. Once released, plays a role in the inhibition of host innate immune response by interacting with host IRF3 and inducing its proteasomal degradation. Packages viral RNA to form a viral nucleocapsid and thereby protects viral RNA. Also plays a role in transcription regulation. Protects the incoming virus against IFN-induced effectors. In terms of biological role, initial binding to target cell probably involves interaction of E(rns) with glycosaminoglycans. Also possesses intrinsic ribonuclease (RNase) activity that can inhibit the production of type I interferon and assist in the development of persistent infections. Its function is as follows. E1 and/or E2 are probably responsible of cell attachment with CD46 and subsequent fusion after internalization of the virion by endocytosis. Functionally, E1 and/or E2 are probably responsible of cell attachment with CD46 and subsequent fusion after internalization of the virion by endocytosis. Probably functions as a coeffector of fusion providing structural integrity to the fusion complex and possibly controlling exposure of the fusion motif in E1. Plays an essential role in the virus replication cycle by acting as a viroporin. Forms ion conductive pores, which alters the cell permeability allowing the transport of ions and other small molecules. Forms a leader sequence to properly orient NS2 in the membrane. In terms of biological role, uncleaved NS2-3 is required for production of infectious virus. Its function is as follows. Plays a role in the regulation of viral RNA replication. Functionally, multifunctional protein that contains an N-terminal protease and a C-terminal helicase, playing essential roles in viral polyprotein processing and viral genome replication. The chymotrypsin-like serine protease activity utilizes NS4A as an essential cofactor and catalyzes the cleavage of the polyprotein leading to the release of NS4A, NS4B, NS5A, and NS5B. Interacts with NS5B to enhance RNA-dependent RNA polymerase activity. Acts as a cofactor for the NS3 protease activity. In terms of biological role, induces a specific membrane alteration that serves as a scaffold for the virus replication complex. Plays a role in the inhibition of host innate immune response by inhibiting RIGI/IFIH1-mediated IFN-beta production. Its function is as follows. Replicates the viral (+) and (-) genome. Initiates the primer-independent RNA replication via a de novo mechanism requiring GTP. The sequence is that of Genome polyprotein from Bos taurus (Bovine).